We begin with the raw amino-acid sequence, 502 residues long: Glycerol kinase (502 aa).

Residue Thr13 coordinates ADP. Residues Thr13, Thr14, and Ser15 each coordinate ATP. Thr13 serves as a coordination point for sn-glycerol 3-phosphate. Arg17 is a binding site for ADP. Positions 83, 84, 136, and 246 each coordinate sn-glycerol 3-phosphate. Glycerol is bound by residues Arg83, Glu84, Tyr136, Asp246, and Gln247. The ADP site is built by Thr268 and Gly311. Thr268, Gly311, Gln315, and Gly412 together coordinate ATP. Residues Gly412 and Asn416 each contribute to the ADP site.

Belongs to the FGGY kinase family.

It catalyses the reaction glycerol + ATP = sn-glycerol 3-phosphate + ADP + H(+). It functions in the pathway polyol metabolism; glycerol degradation via glycerol kinase pathway; sn-glycerol 3-phosphate from glycerol: step 1/1. Its activity is regulated as follows. Inhibited by fructose 1,6-bisphosphate (FBP). In terms of biological role, key enzyme in the regulation of glycerol uptake and metabolism. Catalyzes the phosphorylation of glycerol to yield sn-glycerol 3-phosphate. In Francisella tularensis subsp. holarctica (strain FTNF002-00 / FTA), this protein is Glycerol kinase.